The following is a 445-amino-acid chain: Argininosuccinate synthase (445 aa).

Residues 17-25 and Ala-43 contribute to the ATP site; that span reads AFSGGLDTS. An L-citrulline-binding site is contributed by Tyr-99. ATP is bound by residues Gly-129 and Thr-131. Positions 131, 135, and 136 each coordinate L-aspartate. Asn-135 is a binding site for L-citrulline. An ATP-binding site is contributed by Asp-136. Positions 139 and 192 each coordinate L-citrulline. Asp-194 is an ATP binding site. Thr-201, Glu-203, and Glu-280 together coordinate L-citrulline.

It belongs to the argininosuccinate synthase family. Type 2 subfamily. As to quaternary structure, homotetramer.

It localises to the cytoplasm. It carries out the reaction L-citrulline + L-aspartate + ATP = 2-(N(omega)-L-arginino)succinate + AMP + diphosphate + H(+). It participates in amino-acid biosynthesis; L-arginine biosynthesis; L-arginine from L-ornithine and carbamoyl phosphate: step 2/3. The polypeptide is Argininosuccinate synthase (Rhodopseudomonas palustris (strain ATCC BAA-98 / CGA009)).